A 295-amino-acid polypeptide reads, in one-letter code: Nitrogenase iron protein (295 aa).

10–17 provides a ligand contact to ATP; it reads GKGGIGKS. Residue Cys98 coordinates [4Fe-4S] cluster. Residue Arg101 is modified to ADP-ribosylarginine; by dinitrogenase reductase ADP-ribosyltransferase. [4Fe-4S] cluster is bound at residue Cys133.

It belongs to the NifH/BchL/ChlL family. In terms of assembly, homodimer. [4Fe-4S] cluster is required as a cofactor. Post-translationally, the reversible ADP-ribosylation of Arg-101 inactivates the nitrogenase reductase and regulates nitrogenase activity.

It catalyses the reaction N2 + 8 reduced [2Fe-2S]-[ferredoxin] + 16 ATP + 16 H2O = H2 + 8 oxidized [2Fe-2S]-[ferredoxin] + 2 NH4(+) + 16 ADP + 16 phosphate + 6 H(+). In terms of biological role, the key enzymatic reactions in nitrogen fixation are catalyzed by the nitrogenase complex, which has 2 components: the iron protein and the molybdenum-iron protein. The polypeptide is Nitrogenase iron protein (Tolumonas auensis (strain DSM 9187 / NBRC 110442 / TA 4)).